We begin with the raw amino-acid sequence, 302 residues long: Sulfate adenylyltransferase subunit 2 (302 aa).

A disordered region spans residues 280-302 (RQGRVIDHDQAGSMEQKKREGYF).

This sequence belongs to the PAPS reductase family. CysD subfamily. As to quaternary structure, heterodimer composed of CysD, the smaller subunit, and CysN.

The catalysed reaction is sulfate + ATP + H(+) = adenosine 5'-phosphosulfate + diphosphate. It participates in sulfur metabolism; hydrogen sulfide biosynthesis; sulfite from sulfate: step 1/3. Functionally, with CysN forms the ATP sulfurylase (ATPS) that catalyzes the adenylation of sulfate producing adenosine 5'-phosphosulfate (APS) and diphosphate, the first enzymatic step in sulfur assimilation pathway. APS synthesis involves the formation of a high-energy phosphoric-sulfuric acid anhydride bond driven by GTP hydrolysis by CysN coupled to ATP hydrolysis by CysD. This Hahella chejuensis (strain KCTC 2396) protein is Sulfate adenylyltransferase subunit 2.